Reading from the N-terminus, the 105-residue chain is Large ribosomal subunit protein eL36 (105 aa).

An N6-acetyllysine modification is found at Lys62.

The protein belongs to the eukaryotic ribosomal protein eL36 family. In terms of assembly, component of the large ribosomal subunit.

It localises to the cytoplasm. The protein localises to the cytosol. Component of the large ribosomal subunit. The ribosome is a large ribonucleoprotein complex responsible for the synthesis of proteins in the cell. In Bos taurus (Bovine), this protein is Large ribosomal subunit protein eL36 (RPL36).